Here is a 237-residue protein sequence, read N- to C-terminus: Large ribosomal subunit protein uL1 (237 aa).

It belongs to the universal ribosomal protein uL1 family. Part of the 50S ribosomal subunit.

In terms of biological role, binds directly to 23S rRNA. The L1 stalk is quite mobile in the ribosome, and is involved in E site tRNA release. Functionally, protein L1 is also a translational repressor protein, it controls the translation of the L11 operon by binding to its mRNA. The chain is Large ribosomal subunit protein uL1 from Dehalococcoides mccartyi (strain ATCC BAA-2266 / KCTC 15142 / 195) (Dehalococcoides ethenogenes (strain 195)).